The primary structure comprises 913 residues: DNA mismatch repair protein MutS (913 aa).

720 to 727 contributes to the ATP binding site; sequence GPNASGKS.

The protein belongs to the DNA mismatch repair MutS family.

This protein is involved in the repair of mismatches in DNA. It is possible that it carries out the mismatch recognition step. This protein has a weak ATPase activity. The chain is DNA mismatch repair protein MutS from Prochlorococcus marinus (strain AS9601).